The chain runs to 253 residues: DNA repair protein RecO (253 aa).

This sequence belongs to the RecO family.

In terms of biological role, involved in DNA repair and RecF pathway recombination. This Pediococcus pentosaceus (strain ATCC 25745 / CCUG 21536 / LMG 10740 / 183-1w) protein is DNA repair protein RecO.